The sequence spans 559 residues: DNA ligase (559 aa).

E247 contacts ATP. The N6-AMP-lysine intermediate role is filled by K249. The ATP site is built by R254, R269, E299, F339, R414, and K420.

This sequence belongs to the ATP-dependent DNA ligase family. In terms of assembly, monomer. The cofactor is Mg(2+).

The enzyme catalyses ATP + (deoxyribonucleotide)n-3'-hydroxyl + 5'-phospho-(deoxyribonucleotide)m = (deoxyribonucleotide)n+m + AMP + diphosphate.. It carries out the reaction NAD(+) + (deoxyribonucleotide)n-3'-hydroxyl + 5'-phospho-(deoxyribonucleotide)m = (deoxyribonucleotide)n+m + AMP + beta-nicotinamide D-nucleotide.. In terms of biological role, DNA ligase that seals nicks in double-stranded DNA during DNA replication, DNA recombination and DNA repair. Can also use NAD, but less efficiently than ATP. The sequence is that of DNA ligase from Thermococcus kodakarensis (strain ATCC BAA-918 / JCM 12380 / KOD1) (Pyrococcus kodakaraensis (strain KOD1)).